Consider the following 353-residue polypeptide: ATPase GET3 (353 aa).

26-33 (KGGVGKTT) is a binding site for ATP. Asp-57 is a catalytic residue. Positions 244 and 271 each coordinate ATP. Zn(2+) is bound by residues Cys-284 and Cys-287.

It belongs to the arsA ATPase family. Homodimer. Component of the Golgi to ER traffic (GET) complex, which is composed of GET1, GET2 and GET3. Within the complex, GET1 and GET2 form a heterotetramer which is stabilized by phosphatidylinositol binding and which binds to the GET3 homodimer. Interacts with the chloride channel protein GEF1.

The protein localises to the cytoplasm. Its subcellular location is the endoplasmic reticulum. It localises to the golgi apparatus. ATPase required for the post-translational delivery of tail-anchored (TA) proteins to the endoplasmic reticulum. Recognizes and selectively binds the transmembrane domain of TA proteins in the cytosol. This complex then targets to the endoplasmic reticulum by membrane-bound receptors GET1 and GET2, where the tail-anchored protein is released for insertion. This process is regulated by ATP binding and hydrolysis. ATP binding drives the homodimer towards the closed dimer state, facilitating recognition of newly synthesized TA membrane proteins. ATP hydrolysis is required for insertion. Subsequently, the homodimer reverts towards the open dimer state, lowering its affinity for the GET1-GET2 receptor, and returning it to the cytosol to initiate a new round of targeting. Cooperates with the HDEL receptor ERD2 to mediate the ATP-dependent retrieval of resident ER proteins that contain a C-terminal H-D-E-L retention signal from the Golgi to the ER. Involved in low-level resistance to the oxyanions arsenite and arsenate, and in heat tolerance. This is ATPase GET3 from Zygosaccharomyces rouxii (strain ATCC 2623 / CBS 732 / NBRC 1130 / NCYC 568 / NRRL Y-229).